Reading from the N-terminus, the 261-residue chain is Hydroxyethylthiazole kinase (261 aa).

Substrate is bound at residue M38. ATP is bound by residues R114 and T159. A substrate-binding site is contributed by G186.

This sequence belongs to the Thz kinase family. The cofactor is Mg(2+).

It catalyses the reaction 5-(2-hydroxyethyl)-4-methylthiazole + ATP = 4-methyl-5-(2-phosphooxyethyl)-thiazole + ADP + H(+). It participates in cofactor biosynthesis; thiamine diphosphate biosynthesis; 4-methyl-5-(2-phosphoethyl)-thiazole from 5-(2-hydroxyethyl)-4-methylthiazole: step 1/1. Its function is as follows. Catalyzes the phosphorylation of the hydroxyl group of 4-methyl-5-beta-hydroxyethylthiazole (THZ). This is Hydroxyethylthiazole kinase from Halalkalibacterium halodurans (strain ATCC BAA-125 / DSM 18197 / FERM 7344 / JCM 9153 / C-125) (Bacillus halodurans).